A 345-amino-acid chain; its full sequence is S-adenosylmethionine:tRNA ribosyltransferase-isomerase (345 aa).

It belongs to the QueA family. In terms of assembly, monomer.

The protein resides in the cytoplasm. The catalysed reaction is 7-aminomethyl-7-carbaguanosine(34) in tRNA + S-adenosyl-L-methionine = epoxyqueuosine(34) in tRNA + adenine + L-methionine + 2 H(+). It functions in the pathway tRNA modification; tRNA-queuosine biosynthesis. In terms of biological role, transfers and isomerizes the ribose moiety from AdoMet to the 7-aminomethyl group of 7-deazaguanine (preQ1-tRNA) to give epoxyqueuosine (oQ-tRNA). This Helicobacter pylori (strain Shi470) protein is S-adenosylmethionine:tRNA ribosyltransferase-isomerase.